The sequence spans 386 residues: TGF-beta-activated kinase 1 and MAP3K7-binding protein 1 (386 aa).

Residues 22 to 327 form the PPM-type phosphatase domain; the sequence is HSCRYSKQKN…EEMTVIYVKL (306 aa).

Interacts with mom-4; the interaction enhances mom-4 kinase activity.

Its function is as follows. Involved in the Wnt signaling pathway by regulating mom-4 kinase activity. The polypeptide is TGF-beta-activated kinase 1 and MAP3K7-binding protein 1 (Caenorhabditis elegans).